The primary structure comprises 510 residues: Proline--tRNA ligase (510 aa).

Belongs to the class-II aminoacyl-tRNA synthetase family. ProS type 3 subfamily. As to quaternary structure, homodimer.

The protein localises to the cytoplasm. It catalyses the reaction tRNA(Pro) + L-proline + ATP = L-prolyl-tRNA(Pro) + AMP + diphosphate. In terms of biological role, catalyzes the attachment of proline to tRNA(Pro) in a two-step reaction: proline is first activated by ATP to form Pro-AMP and then transferred to the acceptor end of tRNA(Pro). This is Proline--tRNA ligase from Sphingomonas elodea.